Here is a 1163-residue protein sequence, read N- to C-terminus: MPGPCASAAAFSCILVLLLLGCQRSNPLAAGATVSSMRRLTDTINIGFLAEYSQMRVTLGGLPLAIEDVNKNPNLLPGKKLAFKPVDIGHKMSAYRVKPLRAMTQMREAGVTAFIGPDESCTTEALLASAWNTPMLSFKCSDPIVSNKSTFHTFARTLAPASKVSKSVISLLNAFHWNKFSIVVSSKPIWGSDVARAIQELAEARNFTISHFKYISDYIPTTKTLSQIDKIIEETYATTRIYVFIGEHIAMVDFVRGLQNRRLLESGDYIVVSVDDEIYDSNRRVNIMERNYLDPYIRKEKSKSLDKISFRSVIKISMTYPQNPHIRVPIYGLHLYDSVMIYVRAITEVLRLGGDIYDGNLVMSHIFNRSYHSIQGFDVYIDSNGDAEGNYTVITLQNDVGSGASIGSLAKMSMQPVGFFAYDKNSVIPEFRYIKNDRPIQWLNGRPPLAEPLCGFHGELCPRKKLDWRYLVSGPLCALVVVVAIALLIKHYRYEQTLAGLLWKVDMKDVTVINLGEYNNPTNKNIFQICRQSILVVGEPNKRSFTNIALFRGNIVAMKKIHKKSVDITRSIRKELKLMREVRHENIINFIGASTDHGSVIIFTTYCARGSLEDVLANEDLHLDHMFISSLVSDILKGMIYLHDSEIISHGNLRSSNCLIDSRWVCQISDFGLHELKAGQEEPNKSELELKRALCMAPELLRDAYRPGRGSQKGDVYSFGILLYEMIGRKGPWGDTAYSKEEIIQFVKCPEMLQHGVFRPALTHTHLDIPDYIRKCLCQCWDEDPEVRPDIRLVRMHLKELQAGLKPNIFDNMLSIMEKYAYNLEGLVQERTNLLYEEKKKTDMLLYQMLPRPVAELLKRGDPVEAECFDCVTILFSDIVGFTELCTTSTPFEVVEMLNDWYTCCDSIISNYDVYKVETIGDAYMVVSGLPLQNGSRHAGEIASLALHLLETVGNLKIRHKPTETVQLRIGVHSGPCAAGVVGQKMPRYCLFGDTVNTASRMESTGDSMRIHISEATYQLLQVIGSYVCIERGLTSIKGKGDMRTYWLTKRQQPELTPDLISTVDTLDTYCSGPRESMEVSVHQYCSPASNNYRLGSCNCDTKCLYSRRSDDNVTNSHGTSEFPKVSEPAQVNCNQLCVCRLNSSQMFNNRGPRSAPSITFRL.

The signal sequence occupies residues 1–25 (MPGPCASAAAFSCILVLLLLGCQRS). The Extracellular portion of the chain corresponds to 29–469 (AAGATVSSMR…LCPRKKLDWR (441 aa)). N-linked (GlcNAc...) asparagine glycosylation is found at asparagine 147, asparagine 206, asparagine 368, and asparagine 390. Residues 470–490 (YLVSGPLCALVVVVAIALLIK) form a helical membrane-spanning segment. Residues 491–1163 (HYRYEQTLAG…RSAPSITFRL (673 aa)) are Cytoplasmic-facing. In terms of domain architecture, Protein kinase spans 507–800 (MKDVTVINLG…IRLVRMHLKE (294 aa)). In terms of domain architecture, Guanylate cyclase spans 873–1003 (TILFSDIVGF…DTVNTASRME (131 aa)).

This sequence belongs to the adenylyl cyclase class-4/guanylyl cyclase family.

It localises to the membrane. It carries out the reaction GTP = 3',5'-cyclic GMP + diphosphate. This is Guanylate cyclase 32E (Gyc32E) from Drosophila melanogaster (Fruit fly).